Here is a 302-residue protein sequence, read N- to C-terminus: Recombination-associated protein RdgC (302 aa).

Belongs to the RdgC family.

Its subcellular location is the cytoplasm. The protein resides in the nucleoid. Functionally, may be involved in recombination. The sequence is that of Recombination-associated protein RdgC from Xylella fastidiosa (strain M23).